We begin with the raw amino-acid sequence, 62 residues long: MYKFEIYQDKAGEYRFRFKASNGETMFSSEGYKAKASAIHAIESIKRNSAGADTVDLTTMTA.

It belongs to the UPF0339 family.

The chain is UPF0339 protein Atu0232 from Agrobacterium fabrum (strain C58 / ATCC 33970) (Agrobacterium tumefaciens (strain C58)).